A 507-amino-acid polypeptide reads, in one-letter code: ATP synthase subunit alpha, plastid (507 aa).

170–177 (GDRQTGKT) provides a ligand contact to ATP.

The protein belongs to the ATPase alpha/beta chains family. In terms of assembly, F-type ATPases have 2 components, CF(1) - the catalytic core - and CF(0) - the membrane proton channel. CF(1) has five subunits: alpha(3), beta(3), gamma(1), delta(1), epsilon(1). CF(0) has four main subunits: a, b, b' and c.

It localises to the plastid membrane. The enzyme catalyses ATP + H2O + 4 H(+)(in) = ADP + phosphate + 5 H(+)(out). In terms of biological role, produces ATP from ADP in the presence of a proton gradient across the membrane. The alpha chain is a regulatory subunit. This Cuscuta gronovii (Common dodder) protein is ATP synthase subunit alpha, plastid.